Consider the following 511-residue polypeptide: Probable eukaryotic translation initiation factor 4H (511 aa).

2 disordered regions span residues 25 to 63 and 154 to 511; these read SWAD…DRGS and TIRV…EVKI. A compositionally biased stretch (basic and acidic residues) spans 39–51; that stretch reads AREESGSGLKRGD. The RRM domain maps to 86–162; it reads FTAFIGNLSF…RTIRVNVAEA (77 aa). The span at 179-196 shows a compositional bias: polar residues; sequence WRRSTPLASRESSSQPSR. Composition is skewed to basic and acidic residues over residues 230-247 and 261-270; these read VRRD…RDPG and LAEKVDRDVP. The span at 285-318 shows a compositional bias: polar residues; the sequence is LADTEQTWSRGTKLRTPTTTSRQSSADSTPSSGA. Positions 331 to 349 are enriched in low complexity; that stretch reads TAGSPSATANATPAAPASG. Residue Ser334 is modified to Phosphoserine. Basic and acidic residues-rich tracts occupy residues 360–388 and 394–419; these read AARE…EKQK and KPVE…DKVA. Over residues 420-434 the composition is skewed to low complexity; that stretch reads GKPTTAPATTTNTGA. Residues 438-448 show a composition bias toward basic and acidic residues; the sequence is GSADRAKKDEQ. Over residues 451 to 467 the composition is skewed to polar residues; the sequence is EQVQPSRKSSQTGATSE. Residues 502 to 511 are compositionally biased toward basic and acidic residues; that stretch reads VTKGVEEVKI.

The protein localises to the cytoplasm. Its subcellular location is the P-body. Probable translation initiation factor. The sequence is that of Probable eukaryotic translation initiation factor 4H from Cryptococcus neoformans var. grubii serotype A (strain H99 / ATCC 208821 / CBS 10515 / FGSC 9487) (Filobasidiella neoformans var. grubii).